A 460-amino-acid chain; its full sequence is GTPase Der (460 aa).

2 consecutive EngA-type G domains span residues 3–167 (FTFA…PEPD) and 189–364 (IRVA…AVWN). Residues 9–16 (GRPNVGKS), 56–60 (DTAGL), 119–122 (NKSE), 195–202 (GRPNAGKS), 242–246 (DTAGL), and 307–310 (NKWD) each bind GTP. The KH-like domain occupies 365–449 (TRVPTAALNR…PVRIMLREKA (85 aa)).

Belongs to the TRAFAC class TrmE-Era-EngA-EngB-Septin-like GTPase superfamily. EngA (Der) GTPase family. As to quaternary structure, associates with the 50S ribosomal subunit.

Functionally, GTPase that plays an essential role in the late steps of ribosome biogenesis. In Rhodopseudomonas palustris (strain BisB5), this protein is GTPase Der.